The chain runs to 148 residues: Urease accessory protein UreE (148 aa).

It belongs to the UreE family.

Its subcellular location is the cytoplasm. Its function is as follows. Involved in urease metallocenter assembly. Binds nickel. Probably functions as a nickel donor during metallocenter assembly. The sequence is that of Urease accessory protein UreE from Aliarcobacter butzleri (strain RM4018) (Arcobacter butzleri).